The sequence spans 240 residues: Ribonuclease PH (240 aa).

Residues Arg-87 and 125–127 (GTR) contribute to the phosphate site.

Belongs to the RNase PH family. Homohexameric ring arranged as a trimer of dimers.

It catalyses the reaction tRNA(n+1) + phosphate = tRNA(n) + a ribonucleoside 5'-diphosphate. Phosphorolytic 3'-5' exoribonuclease that plays an important role in tRNA 3'-end maturation. Removes nucleotide residues following the 3'-CCA terminus of tRNAs; can also add nucleotides to the ends of RNA molecules by using nucleoside diphosphates as substrates, but this may not be physiologically important. Probably plays a role in initiation of 16S rRNA degradation (leading to ribosome degradation) during starvation. This Crocosphaera subtropica (strain ATCC 51142 / BH68) (Cyanothece sp. (strain ATCC 51142)) protein is Ribonuclease PH.